We begin with the raw amino-acid sequence, 1213 residues long: DNA-directed RNA polymerase subunit beta' (1213 aa).

Zn(2+) is bound by residues Cys-60, Cys-62, Cys-75, and Cys-78. Positions 450, 452, and 454 each coordinate Mg(2+). 4 residues coordinate Zn(2+): Cys-819, Cys-893, Cys-900, and Cys-903.

This sequence belongs to the RNA polymerase beta' chain family. As to quaternary structure, the RNAP catalytic core consists of 2 alpha, 1 beta, 1 beta' and 1 omega subunit. When a sigma factor is associated with the core the holoenzyme is formed, which can initiate transcription. The cofactor is Mg(2+). Zn(2+) serves as cofactor.

The enzyme catalyses RNA(n) + a ribonucleoside 5'-triphosphate = RNA(n+1) + diphosphate. In terms of biological role, DNA-dependent RNA polymerase catalyzes the transcription of DNA into RNA using the four ribonucleoside triphosphates as substrates. The polypeptide is DNA-directed RNA polymerase subunit beta' (Streptococcus pyogenes serotype M18 (strain MGAS8232)).